Consider the following 325-residue polypeptide: Tetraacyldisaccharide 4'-kinase (325 aa).

55 to 62 contributes to the ATP binding site; it reads TAGGNGKT.

This sequence belongs to the LpxK family.

The enzyme catalyses a lipid A disaccharide + ATP = a lipid IVA + ADP + H(+). It participates in glycolipid biosynthesis; lipid IV(A) biosynthesis; lipid IV(A) from (3R)-3-hydroxytetradecanoyl-[acyl-carrier-protein] and UDP-N-acetyl-alpha-D-glucosamine: step 6/6. Functionally, transfers the gamma-phosphate of ATP to the 4'-position of a tetraacyldisaccharide 1-phosphate intermediate (termed DS-1-P) to form tetraacyldisaccharide 1,4'-bis-phosphate (lipid IVA). The protein is Tetraacyldisaccharide 4'-kinase of Citrobacter koseri (strain ATCC BAA-895 / CDC 4225-83 / SGSC4696).